The sequence spans 108 residues: UPF0060 membrane protein SAR2425 (108 aa).

The next 4 helical transmembrane spans lie at 5-25 (IFIF…IWLW), 31-51 (SSLV…IATF), 60-80 (VYAA…MVVD), and 86-106 (KYDV…LLPS).

The protein belongs to the UPF0060 family.

It is found in the cell membrane. This Staphylococcus aureus (strain MRSA252) protein is UPF0060 membrane protein SAR2425.